A 517-amino-acid polypeptide reads, in one-letter code: MSLIERIKNVVWPKDTLSVVWLYTIGSIFWLGVLGIAAMNLRTFLTYDQNSPNVGELYYSALTIHGWAAMIAFVPMAAAAVIGFSLYKSKLSIIHTKQMAIFFWLSNVLLGIAMAGSPDMGWYMYPPLAIESNSQFHAFLFYTTPQLMGMAYLVMSIAVILQTAAFVTLIADAYATKPKGERLNIFAAYGVAFSIVIAVTLPALAAATLWYTLYFFANVPVNNLLWAILFWFYGHPVVYYVPFPLFGALYYYIPQYAGRSLYSEKWARWNIYLLAIGTMGVWVHHLQTWPLPIVLREWVNLSTLILATGSGLTVLNLGLTIFTSRKYDWKDPVGMGALISLIGFILAGAQALVLPENSINPLFHNSYYVVGHFHLMIWTLIIMGYTTVFLDMLRTSFAGFNFSATSSKWMRIGMIWWTAPFMGVGYAMSVAGYLGFLRRMIAYPVIFQPYNLVESFLAEIGIPGLLLTLFVGMFDALAYASKQPVFSSPSVSSFSMQVDKGELVKKIDSEKGVNNVG.

12 helical membrane-spanning segments follow: residues 19-39 (VVWL…IAAM), 64-84 (IHGW…VIGF), 98-118 (QMAI…AGSP), 150-170 (MAYL…VTLI), 185-205 (IFAA…PALA), 226-246 (WAIL…FPLF), 271-291 (IYLL…TWPL), 303-323 (TLIL…TIFT), 333-353 (VGMG…QALV), 369-389 (VVGH…TTVF), 412-432 (IGMI…SVAG), and 460-480 (IGIP…LAYA). Residue His-65 participates in Fe(II)-heme a binding. Cu cation is bound by residues His-235, Tyr-239, His-284, and His-285. The segment at residues 235–239 (HPVVY) is a cross-link (1'-histidyl-3'-tyrosine (His-Tyr)). His-372 contributes to the heme a3 binding site. His-374 lines the Fe(II)-heme a pocket.

The protein belongs to the heme-copper respiratory oxidase family.

It is found in the cell membrane. It carries out the reaction 2 a quinol + O2 = 2 a quinone + 2 H2O. In terms of biological role, catalyzes the reduction of oxygen to water. Its function is as follows. Subunits I, II and III form the functional core of the enzyme complex. Electrons originating in caldariella quinol are transferred to the binuclear center formed by heme A3 and Cu(B). Functionally, subunit I binds heme a and the bimetallic center. The sequence is that of Quinol oxidase subunit 1 (soxB) from Sulfolobus acidocaldarius (strain ATCC 33909 / DSM 639 / JCM 8929 / NBRC 15157 / NCIMB 11770).